A 481-amino-acid chain; its full sequence is Glutamyl-tRNA(Gln) amidotransferase subunit A (481 aa).

Active-site charge relay system residues include Lys-76 and Ser-151. The active-site Acyl-ester intermediate is the Ser-175.

The protein belongs to the amidase family. GatA subfamily. As to quaternary structure, heterotrimer of A, B and C subunits.

It catalyses the reaction L-glutamyl-tRNA(Gln) + L-glutamine + ATP + H2O = L-glutaminyl-tRNA(Gln) + L-glutamate + ADP + phosphate + H(+). In terms of biological role, allows the formation of correctly charged Gln-tRNA(Gln) through the transamidation of misacylated Glu-tRNA(Gln) in organisms which lack glutaminyl-tRNA synthetase. The reaction takes place in the presence of glutamine and ATP through an activated gamma-phospho-Glu-tRNA(Gln). This Neisseria meningitidis serogroup B (strain ATCC BAA-335 / MC58) protein is Glutamyl-tRNA(Gln) amidotransferase subunit A.